The sequence spans 178 residues: Cytochrome b6-f complex iron-sulfur subunit (178 aa).

Residues 20–42 traverse the membrane as a helical segment; the sequence is LLTFGSVTGVALGALYPVVNYFI. The Rieske domain occupies 71-161; the sequence is THPAGDRSLV…VSVENDNVFV (91 aa). [2Fe-2S] cluster-binding residues include Cys-107, His-109, Cys-125, and His-128. A disulfide bridge links Cys-112 with Cys-127.

Belongs to the Rieske iron-sulfur protein family. The 4 large subunits of the cytochrome b6-f complex are cytochrome b6, subunit IV (17 kDa polypeptide, PetD), cytochrome f and the Rieske protein, while the 4 small subunits are PetG, PetL, PetM and PetN. The complex functions as a dimer. The cofactor is [2Fe-2S] cluster.

The protein resides in the cellular thylakoid membrane. It catalyses the reaction 2 oxidized [plastocyanin] + a plastoquinol + 2 H(+)(in) = 2 reduced [plastocyanin] + a plastoquinone + 4 H(+)(out). Component of the cytochrome b6-f complex, which mediates electron transfer between photosystem II (PSII) and photosystem I (PSI), cyclic electron flow around PSI, and state transitions. This is Cytochrome b6-f complex iron-sulfur subunit from Synechococcus sp. (strain WH7803).